We begin with the raw amino-acid sequence, 303 residues long: N-acetyl-D-glucosamine kinase (303 aa).

Residues 4–11 (GFDIGGTK) and 133–140 (GVGGGLVL) each bind ATP. 4 residues coordinate Zn(2+): histidine 157, cysteine 177, cysteine 179, and cysteine 184.

Belongs to the ROK (NagC/XylR) family. NagK subfamily.

It carries out the reaction N-acetyl-D-glucosamine + ATP = N-acetyl-D-glucosamine 6-phosphate + ADP + H(+). It functions in the pathway cell wall biogenesis; peptidoglycan recycling. Catalyzes the phosphorylation of N-acetyl-D-glucosamine (GlcNAc) derived from cell-wall degradation, yielding GlcNAc-6-P. The polypeptide is N-acetyl-D-glucosamine kinase (Salmonella choleraesuis (strain SC-B67)).